Consider the following 338-residue polypeptide: dTDP-glucose 4,6-dehydratase (338 aa).

Residues 12–13 (FI), 33–36 (DKLT), 59–60 (DI), 81–85 (LAAES), and threonine 100 contribute to the NAD(+) site. Serine 85 is a substrate binding site. Threonine 134 is a binding site for substrate. The Proton donor role is filled by aspartate 135. Active-site proton acceptor residues include glutamate 136 and tyrosine 160. NAD(+) is bound at residue 160–164 (YSASK). Residue asparagine 189 participates in substrate binding. Position 190 (asparagine 190) interacts with NAD(+). Substrate is bound by residues 199 to 200 (KL), 215 to 217 (PIY), arginine 224, asparagine 259, and 293 to 297 (DRPGH).

It belongs to the NAD(P)-dependent epimerase/dehydratase family. dTDP-glucose dehydratase subfamily. In terms of assembly, homodimer. It depends on NAD(+) as a cofactor.

The catalysed reaction is dTDP-alpha-D-glucose = dTDP-4-dehydro-6-deoxy-alpha-D-glucose + H2O. Its pathway is carbohydrate biosynthesis; dTDP-L-rhamnose biosynthesis. The protein operates within bacterial outer membrane biogenesis; LPS O-antigen biosynthesis. Its function is as follows. Catalyzes the dehydration of dTDP-D-glucose to form dTDP-6-deoxy-D-xylo-4-hexulose via a three-step process involving oxidation, dehydration and reduction. This chain is dTDP-glucose 4,6-dehydratase (rffG), found in Haemophilus influenzae (strain ATCC 51907 / DSM 11121 / KW20 / Rd).